The primary structure comprises 498 residues: Cytochrome P450 6B1 (498 aa).

Cys443 is a binding site for heme.

Belongs to the cytochrome P450 family. Heme is required as a cofactor. Midgut microsome.

Its subcellular location is the endoplasmic reticulum membrane. The protein resides in the microsome membrane. It catalyses the reaction an organic molecule + reduced [NADPH--hemoprotein reductase] + O2 = an alcohol + oxidized [NADPH--hemoprotein reductase] + H2O + H(+). In terms of biological role, enables the insect to feed on furanocoumarin-producing plants and evolved as an adaptation for detoxification of xanthotoxin and other furanocoumarins. This is Cytochrome P450 6B1 (CYP6B1) from Papilio polyxenes (Black swallowtail butterfly).